A 308-amino-acid polypeptide reads, in one-letter code: Mycothiol acetyltransferase (308 aa).

2 N-acetyltransferase domains span residues 12 to 149 (DVLD…RPLG) and 165 to 308 (VTVR…RTET). 1D-myo-inositol 2-(L-cysteinylamino)-2-deoxy-alpha-D-glucopyranoside is bound at residue Glu43. 88 to 90 (LVV) contacts acetyl-CoA. Positions 192, 231, and 240 each coordinate 1D-myo-inositol 2-(L-cysteinylamino)-2-deoxy-alpha-D-glucopyranoside. Residues 244-246 (VGV) and 251-257 (QGGGLGR) each bind acetyl-CoA. A 1D-myo-inositol 2-(L-cysteinylamino)-2-deoxy-alpha-D-glucopyranoside-binding site is contributed by Tyr278.

The protein belongs to the acetyltransferase family. MshD subfamily. In terms of assembly, monomer.

It catalyses the reaction 1D-myo-inositol 2-(L-cysteinylamino)-2-deoxy-alpha-D-glucopyranoside + acetyl-CoA = mycothiol + CoA + H(+). Functionally, catalyzes the transfer of acetyl from acetyl-CoA to desacetylmycothiol (Cys-GlcN-Ins) to form mycothiol. The sequence is that of Mycothiol acetyltransferase from Streptomyces bingchenggensis (strain BCW-1).